Reading from the N-terminus, the 397-residue chain is MRFTLKTTAIVSAAALLAGFGPPPRAAELPPGRLATTEDYFAQQAKQAVTPDVMAQLAYMNYIDFISPFYSRGCSFEAWELKHTPQRVIKYSIAFYAYGLASVALIDPKLRALAGHDLDIAVSKMKCKRVWGDWEEDGFGTDPIEKENIMYKGHLNLMYGLYQLVTGSRRYEAEHAHLTRIIHDEIAANPFAGIVCEPDNYFVQCNSVAYLSLWVYDRLHGTDYRAATRAWLDFIQKDLIDPERGAFYLSYHPESGAVKPWISAYTTAWTLAMVHGMDPAFSERYYPRFKQTFVEVYDEGRKARVRETAGTDDADGGVGLASAFTLLLAREMGDQQLFDQLLNHLEPPAKPSIVSASLRYEHPGSLLFDELLFLAKVHAGFGALLRMPPPAAKLAGK.

Positions 1-26 (MRFTLKTTAIVSAAALLAGFGPPPRA) are cleaved as a signal peptide. The active-site Proton donor/acceptor is Asp64. Disulfide bonds link Cys74-Cys127 and Cys196-Cys205. (2E)-geraniol is bound at residue Cys196.

In terms of assembly, homotetramer. Homopentamer.

Its subcellular location is the periplasm. It carries out the reaction (S)-linalool = beta-myrcene + H2O. It catalyses the reaction (2E)-geraniol = (S)-linalool. It participates in terpene metabolism; monoterpene degradation. Is inhibited by molecular oxygen, high salt concentrations (NaCl, KCl, or MgCl(2)), urea, and Ti(III)citrate. Activity is not affected by EDTA. Anaerobically catalyzes the stereospecific hydration of beta-myrcene to (3S)-linalool and the isomerization of (3S)-linalool to geraniol. Is thus involved in the initial steps of the anaerobic degradation of the monoterpene beta-myrcene. Also catalyzes the reverse reactions, i.e. the isomerization of geraniol to linalool and the dehydration of linalool to myrcene. In this direction, the formation of myrcene from geraniol may be seen as a detoxification process for the monoterpene alcohol. Shows a relatively broad substrate specificity and can use various geraniol and linalool derivatives. Substrates required a specific alpha-methylallyl alcohol signature motif. Neither the monoterpenes alpha- and beta-ocimene nor the monoterpenoids citronellol and nerol can be used as substrates. The polypeptide is Linalool dehydratase/isomerase (Castellaniella defragrans (strain DSM 12143 / CCUG 39792 / 65Phen) (Alcaligenes defragrans)).